Here is a 573-residue protein sequence, read N- to C-terminus: DNA ligase (573 aa).

Glu250 lines the ATP pocket. The active-site N6-AMP-lysine intermediate is the Lys252. Residues Arg257, Arg272, Glu301, Phe342, Arg432, and Lys438 each contribute to the ATP site.

The protein belongs to the ATP-dependent DNA ligase family. The cofactor is Mg(2+).

The enzyme catalyses ATP + (deoxyribonucleotide)n-3'-hydroxyl + 5'-phospho-(deoxyribonucleotide)m = (deoxyribonucleotide)n+m + AMP + diphosphate.. Its function is as follows. DNA ligase that seals nicks in double-stranded DNA during DNA replication, DNA recombination and DNA repair. This is DNA ligase from Methanococcus maripaludis (strain C5 / ATCC BAA-1333).